The chain runs to 100 residues: Urease subunit gamma (100 aa).

The protein belongs to the urease gamma subunit family. Heterotrimer of UreA (gamma), UreB (beta) and UreC (alpha) subunits. Three heterotrimers associate to form the active enzyme.

The protein resides in the cytoplasm. The enzyme catalyses urea + 2 H2O + H(+) = hydrogencarbonate + 2 NH4(+). The protein operates within nitrogen metabolism; urea degradation; CO(2) and NH(3) from urea (urease route): step 1/1. This chain is Urease subunit gamma, found in Prochlorococcus marinus subsp. pastoris (strain CCMP1986 / NIES-2087 / MED4).